Reading from the N-terminus, the 367-residue chain is GDSL esterase/lipase 3 (367 aa).

The signal sequence occupies residues 1-23 (MVRLVLIIFFVYTIILSIGSINC). The Nucleophile role is filled by Ser-42. 3 N-linked (GlcNAc...) asparagine glycosylation sites follow: Asn-175, Asn-194, and Asn-321. Residues Asp-329 and His-332 contribute to the active site. A glycan (N-linked (GlcNAc...) asparagine) is linked at Asn-351.

This sequence belongs to the 'GDSL' lipolytic enzyme family.

The protein resides in the secreted. This Arabidopsis thaliana (Mouse-ear cress) protein is GDSL esterase/lipase 3 (GLIP3).